The primary structure comprises 1281 residues: Zinc finger transcription factor Trps1 (1281 aa).

Residues 1–198 (MVRKKNPPLR…VPSDGGVRLN (198 aa)) form a disordered region. Lys29 is covalently cross-linked (Glycyl lysine isopeptide (Lys-Gly) (interchain with G-Cter in SUMO2)). The span at 40-49 (DQMSENTDQS) shows a compositional bias: polar residues. Over residues 53 to 63 (ELNHKEEHSLH) the composition is skewed to basic and acidic residues. Lys76 is covalently cross-linked (Glycyl lysine isopeptide (Lys-Gly) (interchain with G-Cter in SUMO2)). Phosphoserine is present on residues Ser90 and Ser127. Residues 148-162 (LETKEDQKMSPKATE) are compositionally biased toward basic and acidic residues. A compositionally biased stretch (polar residues) spans 163-189 (ETGQAQSGQANCQGLSPVSVASKNPQV). Ser178 and Ser216 each carry phosphoserine. The C2H2-type 1; atypical zinc finger occupies 222–247 (FKCNICGYGYYGNDPTDLIKHFRKYH). A Glycyl lysine isopeptide (Lys-Gly) (interchain with G-Cter in SUMO2) cross-link involves residue Lys263. A C2H2-type 2; atypical zinc finger spans residues 333–358 (FRCKFCNFTYMGNSSTELEQHFLQTH). The segment at 365-394 (SLPSSEVAKPSEKNSNKSIPALQSSDSGDL) is disordered. Positions 380–391 (NKSIPALQSSDS) are enriched in polar residues. Residues Lys418, Lys457, Lys474, and Lys488 each participate in a glycyl lysine isopeptide (Lys-Gly) (interchain with G-Cter in SUMO2) cross-link. Residues 483–512 (QNDLAKSSEGETMTKTDKSSSGAKKKDFSS) are disordered. Residues 488–512 (KSSEGETMTKTDKSSSGAKKKDFSS) show a composition bias toward basic and acidic residues. Residues 614 to 637 (HQCHQCSFTTPDVDVLLFHYESVH) form a C2H2-type 3; atypical zinc finger. Residues 635-819 (SVHESQASDV…SLGLLTPVSG (185 aa)) are mediates interaction with GLI3. A Glycyl lysine isopeptide (Lys-Gly) (interchain with G-Cter in SUMO2) cross-link involves residue Lys645. 2 consecutive C2H2-type zinc fingers follow at residues 666–689 (HSCT…RRAH) and 692–715 (YKCR…NTVH). Residue Lys737 forms a Glycyl lysine isopeptide (Lys-Gly) (interchain with G-Cter in SUMO2) linkage. Thr751 carries the phosphothreonine modification. Residue Lys755 forms a Glycyl lysine isopeptide (Lys-Gly) (interchain with G-Cter in SUMO2) linkage. Lys766 participates in a covalent cross-link: Glycyl lysine isopeptide (Lys-Gly) (interchain with G-Cter in SUMO1); alternate. A Glycyl lysine isopeptide (Lys-Gly) (interchain with G-Cter in SUMO2); alternate cross-link involves residue Lys766. Residues Lys825, Lys850, Lys877, and Lys879 each participate in a glycyl lysine isopeptide (Lys-Gly) (interchain with G-Cter in SUMO2) cross-link. Positions 856 to 887 (APAGGEKSGALPQQYPASGENKSKDESQSLLR) are disordered. The GATA-type zinc-finger motif lies at 896–920 (CANCLTTKTSLWRKNANGGYVCNAC). Glycyl lysine isopeptide (Lys-Gly) (interchain with G-Cter in SUMO2) cross-links involve residues Lys925, Lys937, and Lys965. Residues 961–977 (EQLNKQQRGSNEEQVNG) are compositionally biased toward polar residues. The interval 961 to 1000 (EQLNKQQRGSNEEQVNGSPLERRSEDHLTESHQREIPLPS) is disordered. A Phosphoserine modification is found at Ser978. The span at 980 to 995 (LERRSEDHLTESHQRE) shows a compositional bias: basic and acidic residues. Residues 985–1184 (EDHLTESHQR…PTANGASKEK (200 aa)) form a mediates interaction with RNF4 region. Glycyl lysine isopeptide (Lys-Gly) (interchain with G-Cter in SUMO2) cross-links involve residues Lys1003, Lys1012, Lys1030, and Lys1040. The interval 1039 to 1080 (IKSPQESTGDPGNSSSVSEGKGSSERGSPIEKYMRPAKHPNY) is disordered. Over residues 1040-1049 (KSPQESTGDP) the composition is skewed to polar residues. A Phosphoserine modification is found at Ser1041. Residues 1050–1059 (GNSSSVSEGK) are compositionally biased toward low complexity. Residues 1060–1072 (GSSERGSPIEKYM) are compositionally biased toward basic and acidic residues. Residue Ser1066 is modified to Phosphoserine. Residue Lys1070 forms a Glycyl lysine isopeptide (Lys-Gly) (interchain with G-Cter in SUMO2) linkage. Phosphoserine is present on Ser1085. The segment at 1163–1281 (PLDLAIKHSR…QVEKNGKPKE (119 aa)) is transcriptional repressor domain. The tract at residues 1168–1196 (IKHSRPGPTANGASKEKTKAPPNVKNEGP) is disordered. Residues Lys1192 and Lys1201 each participate in a glycyl lysine isopeptide (Lys-Gly) (interchain with G-Cter in SUMO2); alternate cross-link. Glycyl lysine isopeptide (Lys-Gly) (interchain with G-Cter in SUMO); alternate cross-links involve residues Lys1192 and Lys1201. Lys1201 is covalently cross-linked (Glycyl lysine isopeptide (Lys-Gly) (interchain with G-Cter in SUMO1); alternate). 2 C2H2-type zinc fingers span residues 1215 to 1237 (TKCV…MSCH) and 1243 to 1267 (FQCS…RGLH).

Interacts with RNF4; regulates TRPS1 repressor activity. Interacts specifically with the activator form of GLI3 (GLI3A) but not with the repressor form (GLI3R). Post-translationally, sumoylated. Sumoylation in the repressor domain inhibits the transcription repression activity. Sumoylation on Lys-1201 is the major site. Appears to be sumoylated on multiple sites. Ubiquitously expressed in the adult. Found in fetal brain, lung, kidney, liver, spleen and thymus. More highly expressed in androgen-dependent than in androgen-independent prostate cancer cells.

The protein resides in the nucleus. Transcriptional repressor. Binds specifically to GATA sequences and represses expression of GATA-regulated genes at selected sites and stages in vertebrate development. Regulates chondrocyte proliferation and differentiation. Executes multiple functions in proliferating chondrocytes, expanding the region of distal chondrocytes, activating proliferation in columnar cells and supporting the differentiation of columnar into hypertrophic chondrocytes. The chain is Zinc finger transcription factor Trps1 (TRPS1) from Homo sapiens (Human).